A 445-amino-acid polypeptide reads, in one-letter code: Histamine H3 receptor (445 aa).

Residues 1 to 39 (MERAPPDGPLNASGALAGEAAAAGGARGFSAAWTAVLAA) are Extracellular-facing. Asn-11 carries an N-linked (GlcNAc...) asparagine glycan. A helical membrane pass occupies residues 40-60 (LMALLIVATVLGNALVMLAFV). The Cytoplasmic portion of the chain corresponds to 61-70 (ADSSLRTQNN). The helical transmembrane segment at 71-91 (FFLLNLAISDFLVGAFCIPLY) threads the bilayer. At 92-108 (VPYVLTGRWTFGRGLCK) the chain is on the extracellular side. Cys-107 and Cys-188 are joined by a disulfide. A helical transmembrane segment spans residues 109–129 (LWLVVDYLLCTSSAFNIVLIS). Residues 130-156 (YDRFLSVTRAVSYRAQQGDTRRAVRKM) lie on the Cytoplasmic side of the membrane. Residues 157–177 (LLVWVLAFLLYGPAILSWEYL) form a helical membrane-spanning segment. Residues 178-196 (SGGSSIPEGHCYAEFFYNW) are Extracellular-facing. The helical transmembrane segment at 197–217 (YFLITASTLEFFTPFLSVTFF) threads the bilayer. The Cytoplasmic segment spans residues 218–359 (NLSIYLNIQR…LSRDRKVAKS (142 aa)). Disordered regions lie at residues 237-260 (REAAGPEPPPEAQPSPPPPPGCWG) and 288-336 (EATL…LEKR). Pro residues predominate over residues 242–257 (PEPPPEAQPSPPPPPG). The segment covering 290–299 (TLGGGGGGGS) has biased composition (gly residues). Over residues 300–312 (VASPTSSSGSSSR) the composition is skewed to low complexity. Residues 360–380 (LAVIVSIFGLCWAPYTLLMII) traverse the membrane as a helical segment. Topologically, residues 381–395 (RAACHGHCVPDYWYE) are extracellular. Residues 396 to 416 (TSFWLLWANSAVNPVLYPLCH) form a helical membrane-spanning segment. Residues 417–445 (HSFRRAFTKLLCPQKLKIQPHSSLEHCWK) are Cytoplasmic-facing. Ser-439 carries the phosphoserine modification.

The protein belongs to the G-protein coupled receptor 1 family. Expressed predominantly in the CNS, with the greatest expression in the thalamus and caudate nucleus. The various isoforms are mainly coexpressed in brain, but their relative expression level varies in a region-specific manner. Isoform 3 and isoform 7 are highly expressed in the thalamus, caudate nucleus and cerebellum while isoform 5 and isoform 6 show a poor expression. Isoform 5 and isoform 6 show a high expression in the amygdala, substantia nigra, cerebral cortex and hypothalamus. Isoform 7 is not found in hypothalamus or substantia nigra.

It localises to the cell membrane. The H3 subclass of histamine receptors could mediate the histamine signals in CNS and peripheral nervous system. Signals through the inhibition of adenylate cyclase and displays high constitutive activity (spontaneous activity in the absence of agonist). Agonist stimulation of isoform 3 neither modified adenylate cyclase activity nor induced intracellular calcium mobilization. This Homo sapiens (Human) protein is Histamine H3 receptor (HRH3).